A 260-amino-acid polypeptide reads, in one-letter code: Type II methyltransferase M.CviBI (260 aa).

Positions 7, 11, 54, and 177 each coordinate S-adenosyl-L-methionine.

The protein belongs to the N(4)/N(6)-methyltransferase family.

It carries out the reaction a 2'-deoxyadenosine in DNA + S-adenosyl-L-methionine = an N(6)-methyl-2'-deoxyadenosine in DNA + S-adenosyl-L-homocysteine + H(+). In terms of biological role, a alpha subtype methylase, recognizes the double-stranded sequence 5'-GANTC-3', methylates A-2 on both strands, and protects the DNA from cleavage by the CviBI endonuclease. This chain is Type II methyltransferase M.CviBI, found in Paramecium bursaria Chlorella virus NC1A (PBCV-NC1A).